Consider the following 584-residue polypeptide: MRSNYCTELDSGDIGKIVDVCGWVNSYRDHGGVIFIDLRDRSGLIQLVCDPKHSQEAYTIANSVRDEFVLRAHGKIRARGKDLINPKLKTGEIEVVVENLIVENPSKPLPFVIGDKNVSEETRLKYRFLDLRTNENFNKFFTRSKAAIAARNALDRLGFVEVETPILTRATPEGARDYLVPSRVYNGQFYALPQSPQLFKQLLMCSCFDKYFQIARCFRDEDLRADRQPEFTQIDIEMSFCDQKDVMKVGEAVLKDIFKSCGKDIKTPFRVMQYKDAMENYGSDKPDLRFGMKFIDVADIFEKSSNEIFANIAKDKKKNRVKAIKVEGGDLKFSKRQMQRFEEYVRKFGAQGLAFIQVKEEGLKGPLVKFFEKSEIDELVKRCELKVGDVVFFGAGKKKIVLDYMGRFRIFLANELELINPDALEFLWVVDFPMFEQNEDGTYSAMHHPFTMPNNVDEPDIEEITSIAYDVVLNGIELGGGSIRIHKEDIQEKVFKLLKIEPAEQREKFGFLLDALSFGAPPHGGIAIGFDRLMMLVTRSSSIRDVIAFPKTQRAQCLLTKAPSGISNEQLRELGLKINKKEQK.

Position 173 (glutamate 173) interacts with L-aspartate. The tract at residues 197-200 (QLFK) is aspartate. Arginine 219 is an L-aspartate binding site. Residues 219 to 221 (RDE) and glutamine 228 contribute to the ATP site. L-aspartate is bound at residue histidine 447. ATP is bound at residue glutamate 477. An L-aspartate-binding site is contributed by arginine 484. 529 to 532 (GFDR) lines the ATP pocket.

It belongs to the class-II aminoacyl-tRNA synthetase family. Type 1 subfamily. As to quaternary structure, homodimer.

It is found in the cytoplasm. It catalyses the reaction tRNA(Asx) + L-aspartate + ATP = L-aspartyl-tRNA(Asx) + AMP + diphosphate. Its function is as follows. Aspartyl-tRNA synthetase with relaxed tRNA specificity since it is able to aspartylate not only its cognate tRNA(Asp) but also tRNA(Asn). Reaction proceeds in two steps: L-aspartate is first activated by ATP to form Asp-AMP and then transferred to the acceptor end of tRNA(Asp/Asn). In Campylobacter hominis (strain ATCC BAA-381 / DSM 21671 / CCUG 45161 / LMG 19568 / NCTC 13146 / CH001A), this protein is Aspartate--tRNA(Asp/Asn) ligase.